A 351-amino-acid chain; its full sequence is Tryptophan--tRNA ligase 2 (351 aa).

Residues 1 to 24 (MPFVDLEVPTMTTPTPAATPARPR) form a disordered region. Over residues 9–24 (PTMTTPTPAATPARPR) the composition is skewed to low complexity. The 'HIGH' region signature appears at 31-39 (PTGALHLGH). The short motif at 215–219 (KMSKS) is the 'KMSKS' region element. An ATP-binding site is contributed by Lys-218.

This sequence belongs to the class-I aminoacyl-tRNA synthetase family. As to quaternary structure, homodimer. Forms a complex with nos; one homodimer of trpS2 binds one homodimer of nos.

It catalyses the reaction tRNA(Trp) + L-tryptophan + ATP = L-tryptophyl-tRNA(Trp) + AMP + diphosphate + H(+). In terms of biological role, catalyzes the formation of 5'adenyl-Trp and tRNA(Trp) but with 5-fold less activity than TrpRS. Increases the solubility of the nitric oxide synthase oxygenase (nos), as well as its affinity for substrate L-arginine and its nitric-oxide synthase activity. The complex between trpS2 and nos catalyzes the regioselective nitration of tryptophan at the 4-position. The polypeptide is Tryptophan--tRNA ligase 2 (trpS2) (Deinococcus radiodurans (strain ATCC 13939 / DSM 20539 / JCM 16871 / CCUG 27074 / LMG 4051 / NBRC 15346 / NCIMB 9279 / VKM B-1422 / R1)).